A 210-amino-acid chain; its full sequence is Thiamine-phosphate synthase (210 aa).

4-amino-2-methyl-5-(diphosphooxymethyl)pyrimidine-binding positions include 36–40 and Asn-68; that span reads QLREK. Residues Asp-69 and Asp-88 each contribute to the Mg(2+) site. Position 107 (Ser-107) interacts with 4-amino-2-methyl-5-(diphosphooxymethyl)pyrimidine. 133–135 serves as a coordination point for 2-[(2R,5Z)-2-carboxy-4-methylthiazol-5(2H)-ylidene]ethyl phosphate; it reads TGS. Lys-136 is a 4-amino-2-methyl-5-(diphosphooxymethyl)pyrimidine binding site. Residues Gly-164 and 184-185 each bind 2-[(2R,5Z)-2-carboxy-4-methylthiazol-5(2H)-ylidene]ethyl phosphate; that span reads IS.

This sequence belongs to the thiamine-phosphate synthase family. Requires Mg(2+) as cofactor.

The enzyme catalyses 2-[(2R,5Z)-2-carboxy-4-methylthiazol-5(2H)-ylidene]ethyl phosphate + 4-amino-2-methyl-5-(diphosphooxymethyl)pyrimidine + 2 H(+) = thiamine phosphate + CO2 + diphosphate. It carries out the reaction 2-(2-carboxy-4-methylthiazol-5-yl)ethyl phosphate + 4-amino-2-methyl-5-(diphosphooxymethyl)pyrimidine + 2 H(+) = thiamine phosphate + CO2 + diphosphate. The catalysed reaction is 4-methyl-5-(2-phosphooxyethyl)-thiazole + 4-amino-2-methyl-5-(diphosphooxymethyl)pyrimidine + H(+) = thiamine phosphate + diphosphate. The protein operates within cofactor biosynthesis; thiamine diphosphate biosynthesis; thiamine phosphate from 4-amino-2-methyl-5-diphosphomethylpyrimidine and 4-methyl-5-(2-phosphoethyl)-thiazole: step 1/1. Its function is as follows. Condenses 4-methyl-5-(beta-hydroxyethyl)thiazole monophosphate (THZ-P) and 2-methyl-4-amino-5-hydroxymethyl pyrimidine pyrophosphate (HMP-PP) to form thiamine monophosphate (TMP). The polypeptide is Thiamine-phosphate synthase (Moorella thermoacetica (strain ATCC 39073 / JCM 9320)).